A 437-amino-acid chain; its full sequence is Trigger factor (437 aa).

In terms of domain architecture, PPIase FKBP-type spans 161–246 (GDQVNINFVG…VNSVSEAVLP (86 aa)).

The protein belongs to the FKBP-type PPIase family. Tig subfamily.

The protein localises to the cytoplasm. The enzyme catalyses [protein]-peptidylproline (omega=180) = [protein]-peptidylproline (omega=0). Its function is as follows. Involved in protein export. Acts as a chaperone by maintaining the newly synthesized protein in an open conformation. Functions as a peptidyl-prolyl cis-trans isomerase. This Cellvibrio japonicus (strain Ueda107) (Pseudomonas fluorescens subsp. cellulosa) protein is Trigger factor.